Reading from the N-terminus, the 158-residue chain is Cyclic pyranopterin monophosphate synthase (158 aa).

Substrate-binding positions include 74–76 (MCH) and 112–113 (ME). D127 is an active-site residue.

This sequence belongs to the MoaC family. Homohexamer; trimer of dimers.

The enzyme catalyses (8S)-3',8-cyclo-7,8-dihydroguanosine 5'-triphosphate = cyclic pyranopterin phosphate + diphosphate. The protein operates within cofactor biosynthesis; molybdopterin biosynthesis. Functionally, catalyzes the conversion of (8S)-3',8-cyclo-7,8-dihydroguanosine 5'-triphosphate to cyclic pyranopterin monophosphate (cPMP). This Helicobacter pylori (strain HPAG1) protein is Cyclic pyranopterin monophosphate synthase.